A 556-amino-acid chain; its full sequence is Formate--tetrahydrofolate ligase (556 aa).

65–72 (TPAGEGKS) is an ATP binding site.

Belongs to the formate--tetrahydrofolate ligase family.

The enzyme catalyses (6S)-5,6,7,8-tetrahydrofolate + formate + ATP = (6R)-10-formyltetrahydrofolate + ADP + phosphate. It participates in one-carbon metabolism; tetrahydrofolate interconversion. The protein is Formate--tetrahydrofolate ligase of Streptococcus thermophilus (strain CNRZ 1066).